We begin with the raw amino-acid sequence, 196 residues long: Ribonuclease HII (196 aa).

In terms of domain architecture, RNase H type-2 spans 15–196; the sequence is YIVAGIDEAG…RKSFRYSCFI (182 aa). D21, E22, and D112 together coordinate a divalent metal cation.

This sequence belongs to the RNase HII family. Mn(2+) serves as cofactor. It depends on Mg(2+) as a cofactor.

The protein localises to the cytoplasm. The enzyme catalyses Endonucleolytic cleavage to 5'-phosphomonoester.. Its function is as follows. Endonuclease that specifically degrades the RNA of RNA-DNA hybrids. The polypeptide is Ribonuclease HII (Rickettsia canadensis (strain McKiel)).